The sequence spans 217 residues: Elongation factor Ts (217 aa).

The tract at residues 82–85 is involved in Mg(2+) ion dislocation from EF-Tu; that stretch reads TDFV.

Belongs to the EF-Ts family.

The protein localises to the cytoplasm. Associates with the EF-Tu.GDP complex and induces the exchange of GDP to GTP. It remains bound to the aminoacyl-tRNA.EF-Tu.GTP complex up to the GTP hydrolysis stage on the ribosome. This Prochlorococcus marinus (strain SARG / CCMP1375 / SS120) protein is Elongation factor Ts.